The sequence spans 358 residues: MLSIRRSLTLAKEPKDLFLFLCNLRARCVSTDDYDPPFSPLSKPTKPPKEKKKQKTKKQDQSSELVNDLKIPVISDLPFDFRYSYSETNPEIEPIGFREPKRFSPFGPGRLDRKWTGTTALASPEIDQSQWVEERARVLGETLTEDEVTELIERYRHSDCTRQINLGKGGVTHNMIDDIHNHWKKAEAVRIKCLGVPTLDMDNICFHLEEKSGGKIVYRNINILVLYRGRNYDPKSRPIIPLMLWKPHPPIYPRLVKNVADGLEFEETKEMRNRGLHSPALMKLTRNGVYVNVVGRVREEFETEEIVRLDCTHVGMSDCKRIGVKLKEMVPCVPILFKDEQIILWRGKRTGEEELVTL.

A mitochondrion-targeting transit peptide spans M1 to C28. Residues D35 to E64 are disordered. CRM domains lie at E141–I239 and D261–T357.

Part of large ribonucleo-protein complexes that include group IIB introns.

It is found in the mitochondrion. Its function is as follows. May be involved in the splicing of group IIB introns in mitochondria. The sequence is that of CRS2-associated factor 2, mitochondrial from Arabidopsis thaliana (Mouse-ear cress).